Consider the following 178-residue polypeptide: SCAN domain-containing protein 1 (178 aa).

The segment at 1-107 (MAATEQSLAP…GSRPGPETFR (107 aa)) is disordered. Low complexity predominate over residues 9–18 (APAGSSAPPS). A compositionally biased stretch (polar residues) spans 36 to 54 (GSSSTPEAPSIPDSSNPSA). One can recognise an SCAN box domain in the interval 107 to 178 (RQRFRQFRYQ…RRRTDVRITG (72 aa)).

In terms of assembly, interacts with ZNF202.

Its subcellular location is the nucleus. May regulate transcriptional activity. This is SCAN domain-containing protein 1 (SCAND1) from Bos taurus (Bovine).